Reading from the N-terminus, the 582-residue chain is ATP-dependent lipid A-core flippase (582 aa).

A run of 6 helical transmembrane segments spans residues 23–43 (AAFI…TLFL), 61–81 (ILLY…SLNV), 140–160 (AVLV…LMFY), 163–183 (WQLS…VGVV), 247–267 (AIST…VLVI), and 273–293 (MLGE…IMLL). Residues 26-308 (IAAILCMIGY…LTNVNSDFQR (283 aa)) form the ABC transmembrane type-1 domain. In terms of domain architecture, ABC transporter spans 340 to 576 (IVFDDVTFSY…EGAYFQLHNL (237 aa)). 374-381 (GRSGSGKS) provides a ligand contact to ATP.

It belongs to the ABC transporter superfamily. Lipid exporter (TC 3.A.1.106) family. In terms of assembly, homodimer.

It localises to the cell inner membrane. It catalyses the reaction ATP + H2O + lipid A-core oligosaccharideSide 1 = ADP + phosphate + lipid A-core oligosaccharideSide 2.. Its function is as follows. Involved in lipopolysaccharide (LPS) biosynthesis. Translocates lipid A-core from the inner to the outer leaflet of the inner membrane. Transmembrane domains (TMD) form a pore in the inner membrane and the ATP-binding domain (NBD) is responsible for energy generation. The protein is ATP-dependent lipid A-core flippase of Idiomarina loihiensis (strain ATCC BAA-735 / DSM 15497 / L2-TR).